The chain runs to 201 residues: Chromophore lyase CpcT/CpeT (201 aa).

It belongs to the CpcT/CpeT biliprotein lyase family.

The protein resides in the plastid. The protein localises to the organellar chromatophore. Its function is as follows. Covalently attaches a chromophore to Cys residue(s) of phycobiliproteins. The protein is Chromophore lyase CpcT/CpeT of Paulinella chromatophora.